Reading from the N-terminus, the 409-residue chain is MATSVGHRCLGLLHGVAPWRSSLHPCEITALSQSLQPLRKLPFRAFRTDARKIHTAPARTMFLLRPLPILLVTGGGYAGYRQYEKYRERELEKLGLEIPPKLAGHWEVALYKSVPTRLLSRAWGRLNQVELPHWLRRPVYSLYIWTFGVNMKEAAVEDLHHYRNLSEFFRRKLKPQARPVCGLHSVISPSDGRILNFGQVKNCEVEQVKGVTYSLESFLGPRMCTEDLPFPPAASCDSFKNQLVTREGNELYHCVIYLAPGDYHCFHSPTDWTVSHRRHFPGSLMSVNPGMARWIKELFCHNERVVLTGDWKHGFFSLTAVGATNVGSIRIYFDRDLHTNSPRHSKGSYNDFSFVTHTNREGVPMRKGEHLGEFNLGSTIVLIFEAPKDFNFQLKTGQKIRFGEALGSL.

The transit peptide at 1–52 directs the protein to the mitochondrion; that stretch reads MATSVGHRCLGLLHGVAPWRSSLHPCEITALSQSLQPLRKLPFRAFRTDARK. The segment at 36–103 is necessary for localization to both lipid droplets and mitochondria; it reads QPLRKLPFRA…LGLEIPPKLA (68 aa). Residues 53–63 are Mitochondrial matrix-facing; sequence IHTAPARTMFL. Residues 64–82 form a helical membrane-spanning segment; the sequence is LRPLPILLVTGGGYAGYRQ. Residues 83-409 lie on the Mitochondrial intermembrane side of the membrane; that stretch reads YEKYRERELE…IRFGEALGSL (327 aa). Active-site charge relay system; for autoendoproteolytic cleavage activity residues include aspartate 191, histidine 267, and serine 378. Serine 378 acts as the Schiff-base intermediate with substrate; via pyruvic acid; for decarboxylase activity in catalysis. A Pyruvic acid (Ser); by autocatalysis modification is found at serine 378.

Belongs to the phosphatidylserine decarboxylase family. PSD-B subfamily. Eukaryotic type I sub-subfamily. Heterodimer of a large membrane-associated beta subunit and a small pyruvoyl-containing alpha subunit. Requires pyruvate as cofactor. In terms of processing, is synthesized initially as an inactive proenzyme. Formation of the active enzyme involves a self-maturation process in which the active site pyruvoyl group is generated from an internal serine residue via an autocatalytic post-translational modification. Two non-identical subunits are generated from the proenzyme in this reaction, and the pyruvate is formed at the N-terminus of the alpha chain, which is derived from the carboxyl end of the proenzyme. The autoendoproteolytic cleavage occurs by a canonical serine protease mechanism, in which the side chain hydroxyl group of the serine supplies its oxygen atom to form the C-terminus of the beta chain, while the remainder of the serine residue undergoes an oxidative deamination to produce ammonia and the pyruvoyl prosthetic group on the alpha chain. During this reaction, the Ser that is part of the protease active site of the proenzyme becomes the pyruvoyl prosthetic group, which constitutes an essential element of the active site of the mature decarboxylase.

It is found in the mitochondrion inner membrane. It localises to the cytoplasm. Its subcellular location is the lipid droplet. The enzyme catalyses a 1,2-diacyl-sn-glycero-3-phospho-L-serine + H(+) = a 1,2-diacyl-sn-glycero-3-phosphoethanolamine + CO2. It participates in phospholipid metabolism; phosphatidylethanolamine biosynthesis. Catalyzes the formation of phosphatidylethanolamine (PtdEtn) from phosphatidylserine (PtdSer). Plays a central role in phospholipid metabolism and in the interorganelle trafficking of phosphatidylserine. May be involved in lipid droplet biogenesis at the endoplasmic reticulum membrane. The chain is Phosphatidylserine decarboxylase proenzyme, mitochondrial from Homo sapiens (Human).